A 167-amino-acid polypeptide reads, in one-letter code: Cofilin-2 (167 aa).

The ADF-H domain occupies 4–153 (GVTVNDEVIK…KDRCTLADKL (150 aa)). Positions 30–34 (KKRKK) match the Nuclear localization signal motif.

It belongs to the actin-binding proteins ADF family.

The protein resides in the nucleus matrix. Its subcellular location is the cytoplasm. It is found in the cytoskeleton. Controls reversibly actin polymerization and depolymerization in a pH-sensitive manner. It has the ability to bind G- and F-actin in a 1:1 ratio of cofilin to actin. It is the major component of intranuclear and cytoplasmic actin rods. The chain is Cofilin-2 (cfl2) from Xenopus tropicalis (Western clawed frog).